The following is an 86-amino-acid chain: Cell division topological specificity factor (86 aa).

Belongs to the MinE family.

Prevents the cell division inhibition by proteins MinC and MinD at internal division sites while permitting inhibition at polar sites. This ensures cell division at the proper site by restricting the formation of a division septum at the midpoint of the long axis of the cell. This Polaromonas sp. (strain JS666 / ATCC BAA-500) protein is Cell division topological specificity factor.